The primary structure comprises 82 residues: ATP synthase subunit c (82 aa).

2 consecutive transmembrane segments (helical) span residues 18 to 38 and 61 to 81; these read LGEA…IGKI and IIAA…CGFL.

The protein belongs to the ATPase C chain family. In terms of assembly, F-type ATPases have 2 components, F(1) - the catalytic core - and F(0) - the membrane proton channel. F(1) has five subunits: alpha(3), beta(3), gamma(1), delta(1), epsilon(1). F(0) has three main subunits: a(1), b(2) and c(10-14). The alpha and beta chains form an alternating ring which encloses part of the gamma chain. F(1) is attached to F(0) by a central stalk formed by the gamma and epsilon chains, while a peripheral stalk is formed by the delta and b chains.

Its subcellular location is the cell inner membrane. Its function is as follows. F(1)F(0) ATP synthase produces ATP from ADP in the presence of a proton or sodium gradient. F-type ATPases consist of two structural domains, F(1) containing the extramembraneous catalytic core and F(0) containing the membrane proton channel, linked together by a central stalk and a peripheral stalk. During catalysis, ATP synthesis in the catalytic domain of F(1) is coupled via a rotary mechanism of the central stalk subunits to proton translocation. Key component of the F(0) channel; it plays a direct role in translocation across the membrane. A homomeric c-ring of between 10-14 subunits forms the central stalk rotor element with the F(1) delta and epsilon subunits. The polypeptide is ATP synthase subunit c (Azobacteroides pseudotrichonymphae genomovar. CFP2).